We begin with the raw amino-acid sequence, 740 residues long: ATP-dependent RNA helicase DBP4 (740 aa).

Positions Met1–Glu37 are disordered. Positions Pro7 to Asn28 are enriched in basic and acidic residues. Residues Ser39–Lys67 carry the Q motif motif. The region spanning Ile70–Ile244 is the Helicase ATP-binding domain. An ATP-binding site is contributed by Ala83–Thr90. The short motif at Asp192–Asp195 is the DEAD box element. One can recognise a Helicase C-terminal domain in the interval Asn257–Ile421. A disordered region spans residues Arg565–Lys740. Basic and acidic residues predominate over residues Gln636–Lys662. Composition is skewed to acidic residues over residues Asp680 to Glu695 and Ser709 to Glu731.

The protein belongs to the DEAD box helicase family. DDX10/DBP4 subfamily. As to quaternary structure, interacts with the U3 and U14 snoRNAs. Associates with pre-ribosomal complexes.

The protein localises to the nucleus. It is found in the nucleolus. The enzyme catalyses ATP + H2O = ADP + phosphate + H(+). In terms of biological role, ATP-dependent RNA helicase required for ribosome biogenesis. Involved in the release of U14 snoRNA in pre-ribosomal complexes. Required for pre-rRNA cleavage at site A2. The polypeptide is ATP-dependent RNA helicase DBP4 (DBP4) (Yarrowia lipolytica (strain CLIB 122 / E 150) (Yeast)).